The primary structure comprises 189 residues: Protein GrpE (189 aa).

The span at 1 to 38 shows a compositional bias: basic and acidic residues; the sequence is MTKSNETERMEESEETHSSDIRSASESDHASGSDHTES. The segment at 1 to 54 is disordered; that stretch reads MTKSNETERMEESEETHSSDIRSASESDHASGSDHTESADEIPTADAEQGELEQ.

Belongs to the GrpE family. In terms of assembly, homodimer.

The protein resides in the cytoplasm. Its function is as follows. Participates actively in the response to hyperosmotic and heat shock by preventing the aggregation of stress-denatured proteins, in association with DnaK and GrpE. It is the nucleotide exchange factor for DnaK and may function as a thermosensor. Unfolded proteins bind initially to DnaJ; upon interaction with the DnaJ-bound protein, DnaK hydrolyzes its bound ATP, resulting in the formation of a stable complex. GrpE releases ADP from DnaK; ATP binding to DnaK triggers the release of the substrate protein, thus completing the reaction cycle. Several rounds of ATP-dependent interactions between DnaJ, DnaK and GrpE are required for fully efficient folding. The sequence is that of Protein GrpE from Tropheryma whipplei (strain TW08/27) (Whipple's bacillus).